A 1581-amino-acid polypeptide reads, in one-letter code: Calmodulin-regulated spectrin-associated protein 1 (1581 aa).

The Calponin-homology (CH) domain occupies 215 to 330 (ESPAHQKVRY…FIAELFWWFE (116 aa)). Phosphoserine occurs at positions 216, 370, 374, and 415. The disordered stretch occupies residues 351–399 (VLQQKSSRPPVPISNATKRSFLGSPAAMSPADQPPSTQPLAEGSHRYHL). Residues 424–470 (RQKQQKVSQTEEIPDQRHRSNSLTRVDGQPRGAIGAWPDKKNRPVSQ) form a disordered region. Thr511 carries the post-translational modification Phosphothreonine. Ser550, Ser553, Ser560, Ser572, and Ser586 each carry phosphoserine. A compositionally biased stretch (basic and acidic residues) spans 603-617 (KQITTKEDERGEGRP). The interval 603 to 649 (KQITTKEDERGEGRPRTIMAKRPSEGSQPMVRKKVSGGHGSRDLNRT) is disordered. Residues Ser626, Ser718, Ser724, Ser734, and Ser736 each carry the phosphoserine modification. Residues 765 to 785 (ESAKLQEDMKVKEHEDKDDAS) show a composition bias toward basic and acidic residues. 2 disordered regions span residues 765 to 803 (ESAK…SMSM) and 821 to 866 (LNSC…SKDP). Composition is skewed to low complexity over residues 792–803 (LSTTSQLSSMSM) and 826–837 (TKSSTSSSQKTT). The segment covering 853–865 (QKREQSPGRHSKD) has biased composition (basic and acidic residues). Residues 867 to 888 (ASLLASELVQLHMQLEEKRRAI) are sufficient for interaction with SPTBN1. 2 coiled-coil regions span residues 869–905 (LLAS…QRLK) and 1005–1037 (DVNE…QEQL). The sufficient for interaction with calmodulin stretch occupies residues 899 to 918 (SARQRLKLGKAAFLHVVKKG). 4 disordered regions span residues 1064 to 1143 (FVEP…ELPE), 1225 to 1251 (PDED…PGVG), 1288 to 1315 (QLEA…EEEK), and 1332 to 1428 (QALE…DWET). Residue Ser1069 is modified to Phosphoserine. The segment covering 1092-1103 (RPAELKVPKDRQ) has biased composition (basic and acidic residues). Over residues 1104–1132 (QGCSRSKTPTPSVETLPQSRSLPPSTHPR) the composition is skewed to polar residues. Ser1133 is modified (phosphoserine). Over residues 1225-1237 (PDEDGEVVGHESS) the composition is skewed to basic and acidic residues. Residues 1265–1336 (AKKRAAFLLK…RRKQQQALEE (72 aa)) are a coiled coil. A compositionally biased stretch (basic residues) spans 1342-1353 (PKSKPKKPRPKS). Residues 1361–1372 (SDSGTKCSSTHN) show a composition bias toward polar residues. Over residues 1373 to 1390 (LSQTHSGSSLSLASAATT) the composition is skewed to low complexity. A phosphoserine mark is found at Ser1378 and Ser1407. The CKK domain occupies 1443–1576 (GPKLFKEPSS…QPKRPTVPKK (134 aa)). Tyr1516 is subject to Phosphotyrosine.

It belongs to the CAMSAP1 family. Interacts with spectrin via SPTBN1; the interaction is direct. Interacts with calmodulin; calcium-dependent it prevents interaction with spectrin. As to expression, expressed in the central nervous system.

It localises to the cytoplasm. The protein localises to the cytoskeleton. Its function is as follows. Key microtubule-organizing protein that specifically binds the minus-end of non-centrosomal microtubules and regulates their dynamics and organization. Specifically recognizes growing microtubule minus-ends and stabilizes microtubules. Acts on free microtubule minus-ends that are not capped by microtubule-nucleating proteins or other factors and protects microtubule minus-ends from depolymerization. In contrast to CAMSAP2 and CAMSAP3, tracks along the growing tips of minus-end microtubules without significantly affecting the polymerization rate: binds at the very tip of the microtubules minus-end and acts as a minus-end tracking protein (-TIP) that dissociates from microtubules after allowing tubulin incorporation. Through interaction with spectrin may regulate neurite outgrowth. The chain is Calmodulin-regulated spectrin-associated protein 1 (Camsap1) from Mus musculus (Mouse).